A 271-amino-acid chain; its full sequence is MLSIQQPLLVFSDLDGTLLDSHSYDWQPAAPWLSRLREANVPVILCSSKTSAEMLYLQKTLGLQGLPLIAENGAVIQLAEQWQDIDGFPRIISGISHGEISQVLNTLREKEHFKFTTFDDVDDATIAEWTGLSRSQAALTQLHEASVTLIWRDSDERMAQFTARLNELGLQFMQGARFWHVLDASAGKDQAANWIIATYQQSSGKRPTTLGLGDGPNDAPLLEVMDYAVIVKGLNREGVHLHDEDPTRVWRTQREGPEGWREGLDHFFSAR.

The active-site Nucleophile is the aspartate 13. Residues aspartate 13, aspartate 15, and aspartate 214 each coordinate Mg(2+).

This sequence belongs to the HAD-like hydrolase superfamily. MPGP family. The cofactor is Mg(2+).

The protein resides in the cytoplasm. It carries out the reaction 2-O-(alpha-D-mannosyl)-3-phosphoglycerate + H2O = (2R)-2-O-(alpha-D-mannosyl)-glycerate + phosphate. The polypeptide is Mannosyl-3-phosphoglycerate phosphatase (Escherichia coli O45:K1 (strain S88 / ExPEC)).